Reading from the N-terminus, the 144-residue chain is Large ribosomal subunit protein uL16 (144 aa).

Belongs to the universal ribosomal protein uL16 family. In terms of assembly, part of the 50S ribosomal subunit.

Functionally, binds 23S rRNA and is also seen to make contacts with the A and possibly P site tRNAs. In Bacillus licheniformis (strain ATCC 14580 / DSM 13 / JCM 2505 / CCUG 7422 / NBRC 12200 / NCIMB 9375 / NCTC 10341 / NRRL NRS-1264 / Gibson 46), this protein is Large ribosomal subunit protein uL16.